The primary structure comprises 702 residues: Cell adhesion molecule CEACAM5 (702 aa).

The signal sequence occupies residues 1–34; sequence MESPSAPPHRWCIPWQRLLLTASLLTFWNPPTTA. Positions 35–144 constitute an Ig-like V-type domain; it reads KLTIESTPFN…TGQFRVYPEL (110 aa). Asn-104, Asn-115, Asn-152, Asn-182, Asn-197, Asn-204, Asn-208, Asn-246, Asn-256, Asn-274, Asn-288, Asn-292, Asn-309, Asn-330, Asn-351, Asn-360, Asn-375, Asn-432, Asn-466, Asn-480, Asn-508, Asn-529, Asn-553, Asn-560, Asn-580, Asn-612, Asn-650, and Asn-665 each carry an N-linked (GlcNAc...) asparagine glycan. 6 consecutive Ig-like C2-type domains span residues 145–232, 240–315, 323–410, 418–495, 501–588, and 593–675; these read PKPS…VILN, PTIS…TVTT, PKPF…VILN, PTIS…KTIT, PKPS…VTLD, and PDTP…ITVS. The cysteines at positions 167 and 215 are disulfide-linked. Cysteines 259 and 299 form a disulfide. An intrachain disulfide couples Cys-345 to Cys-393. Cys-437 and Cys-477 are oxidised to a cystine. The cysteines at positions 523 and 571 are disulfide-linked. The cysteines at positions 615 and 655 are disulfide-linked. A lipid anchor (GPI-anchor amidated alanine) is attached at Ala-685. Positions 686 to 702 are cleaved as a propeptide — removed in mature form; that stretch reads GATVGIMIGVLVGVALI.

This sequence belongs to the immunoglobulin superfamily. CEA family. Homodimer. Complex immunoreactive glycoprotein with a MW of 180 kDa comprising 60% carbohydrate. In terms of tissue distribution, expressed in columnar epithelial and goblet cells of the colon (at protein level). Found in adenocarcinomas of endodermally derived digestive system epithelium and fetal colon.

Its subcellular location is the cell membrane. The protein localises to the apical cell membrane. The protein resides in the cell surface. Functionally, cell surface glycoprotein that plays a role in cell adhesion, intracellular signaling and tumor progression. Mediates homophilic and heterophilic cell adhesion with other carcinoembryonic antigen-related cell adhesion molecules, such as CEACAM6. Plays a role as an oncogene by promoting tumor progression; induces resistance to anoikis of colorectal carcinoma cells. (Microbial infection) Receptor for E.coli Dr adhesins. Binding of E.coli Dr adhesins leads to dissociation of the homodimer. The chain is Cell adhesion molecule CEACAM5 from Homo sapiens (Human).